A 446-amino-acid polypeptide reads, in one-letter code: Exodeoxyribonuclease 7 large subunit (446 aa).

It belongs to the XseA family. Heterooligomer composed of large and small subunits.

Its subcellular location is the cytoplasm. It carries out the reaction Exonucleolytic cleavage in either 5'- to 3'- or 3'- to 5'-direction to yield nucleoside 5'-phosphates.. Its function is as follows. Bidirectionally degrades single-stranded DNA into large acid-insoluble oligonucleotides, which are then degraded further into small acid-soluble oligonucleotides. The polypeptide is Exodeoxyribonuclease 7 large subunit (Streptococcus pneumoniae serotype 4 (strain ATCC BAA-334 / TIGR4)).